We begin with the raw amino-acid sequence, 597 residues long: Elongation factor 4 (597 aa).

Positions 2–184 constitute a tr-type G domain; sequence QHIRNFSIIA…AVISRIPPPK (183 aa). Residues 14 to 19 and 131 to 134 each bind GTP; these read DHGKST and NKID.

It belongs to the TRAFAC class translation factor GTPase superfamily. Classic translation factor GTPase family. LepA subfamily.

Its subcellular location is the cell inner membrane. It catalyses the reaction GTP + H2O = GDP + phosphate + H(+). In terms of biological role, required for accurate and efficient protein synthesis under certain stress conditions. May act as a fidelity factor of the translation reaction, by catalyzing a one-codon backward translocation of tRNAs on improperly translocated ribosomes. Back-translocation proceeds from a post-translocation (POST) complex to a pre-translocation (PRE) complex, thus giving elongation factor G a second chance to translocate the tRNAs correctly. Binds to ribosomes in a GTP-dependent manner. In Nitrosospira multiformis (strain ATCC 25196 / NCIMB 11849 / C 71), this protein is Elongation factor 4.